A 367-amino-acid chain; its full sequence is Prenyltransferase idtC (367 aa).

Residues 1 to 22 (MTTLAWFAGRSMVLDLAALTSA) form the signal peptide. The span at 32–42 (TSTPTSTPTST) shows a compositional bias: low complexity. A disordered region spans residues 32–84 (TSTPTSTPTSTDKAGTPPGSTIHHYGYPQGSVTKPNNSKTEKENGSPKDSKGN). Residue N67 is glycosylated (N-linked (GlcNAc...) asparagine). Positions 70-82 (KTEKENGSPKDSK) are enriched in basic and acidic residues. Substrate is bound at residue H132. 2 residues coordinate Mg(2+): D139 and D143. R148 contributes to the substrate binding site. An N-linked (GlcNAc...) asparagine glycan is attached at N150. The substrate site is built by K233, T234, Q264, N271, and K281.

It belongs to the FPP/GGPP synthase family. Mg(2+) is required as a cofactor.

The protein operates within secondary metabolite biosynthesis. Prenyltransferase; part of the gene cluster that mediates the biosynthesis of paspalitrems, indole-diterpene (IDT) mycotoxins that are potent tremorgens in mammals. The geranylgeranyl diphosphate (GGPP) synthase idtG is proposed to catalyze the first step in IDT biosynthesis via catalysis of a series of iterative condensations of isopentenyl diphosphate (IPP) with dimethylallyl diphosphate (DMAPP), geranyl diphosphate (GPP), and farnesyl diphosphate (FPP), to form GGPP. Condensation of indole-3-glycerol phosphate with GGPP by the prenyltransferase idtC then forms 3-geranylgeranylindole (3-GGI). Epoxidation of the two terminal alkenes of the geranylgeranyl moiety by the FAD-dependent monooxygenase idtM, and cyclization by the terpene cyclase idtB then leads to the production of paspaline. The cytochrome P450 monooxygenase idtP then catalyzes oxidative elimination of the pendant methyl group at C-12 of paspaline and generates the C-10 ketone to yield 13-desoxypaxilline. The cytochrome P450 monooxygenase idtQ may catalyze the C-13 oxidation of 13-desoxypaxilline to afford paxilline. Considering that both paspalicine and paxilline were detected in C.paspali, idtQ also catalyzes the formation of paspalinine from 13-desoxypaxilline via paspalicine as an intermediate. Finally, the alpha-prenyltransferase idtF prenylates paspalinine at the C-20 or the C-21 positions to yield paspalitrems A and C, respectively. The hydroxylation of paspalitrem A at C-32 by a still unknown oxidase affords paspalitrem B. In Claviceps paspali (Rye ergot fungus), this protein is Prenyltransferase idtC.